Reading from the N-terminus, the 236-residue chain is Lectin (236 aa).

Residue Asn-118 is glycosylated (N-linked (GlcNAc...) asparagine).

Belongs to the leguminous lectin family. Homodimer of noncovalently associated chains.

Functionally, D-mannose and D-glucose specific lectin. The protein is Lectin of Onobrychis viciifolia (Common sainfoin).